Consider the following 58-residue polypeptide: uncharacterized protein (58 aa).

A run of 2 helical transmembrane segments spans residues I5–E25 and W32–I52.

It is found in the cell membrane. This is an uncharacterized protein from Methanocaldococcus jannaschii (strain ATCC 43067 / DSM 2661 / JAL-1 / JCM 10045 / NBRC 100440) (Methanococcus jannaschii).